Reading from the N-terminus, the 64-residue chain is Large ribosomal subunit protein bL28 (64 aa).

It belongs to the bacterial ribosomal protein bL28 family.

The polypeptide is Large ribosomal subunit protein bL28 (Mycoplasmoides gallisepticum (strain R(low / passage 15 / clone 2)) (Mycoplasma gallisepticum)).